A 326-amino-acid chain; its full sequence is MGDDALTADSGRDETQSLSPFRYFTAAEWGRLRQDTPLPLSQGELEELKGFGERISLDEVSEIYLPLSRLLNLYVGETQELYRVTSDFLGREQDKVPYIIGVAGSVAVGKSTTARILRTLLARWPNHPKVDLITTDGFLYPNKVLEERGLMQRKGFPESFDIKRLLRFLSDVKAGSRHVEAPVYSHFTYDILPGETIPVDYPDILVVEGLNVLQPWKPADGDEPQPFVSDFFDFSIYLDADEASIRRWYIERFLSLRRTSFKDPAAYFHRYSKLTEEEAVETADAIWTSINLANLRKNILPTRQRADLILRKGDDHRIRDVLLRKL.

G104 to S111 serves as a coordination point for ATP.

It belongs to the prokaryotic pantothenate kinase family.

It localises to the cytoplasm. The catalysed reaction is (R)-pantothenate + ATP = (R)-4'-phosphopantothenate + ADP + H(+). It functions in the pathway cofactor biosynthesis; coenzyme A biosynthesis; CoA from (R)-pantothenate: step 1/5. The protein is Pantothenate kinase of Parvibaculum lavamentivorans (strain DS-1 / DSM 13023 / NCIMB 13966).